Consider the following 306-residue polypeptide: Ribonuclease Z (306 aa).

7 residues coordinate Zn(2+): His63, His65, Asp67, His68, His141, Asp211, and His269. Residue Asp67 is the Proton acceptor of the active site.

This sequence belongs to the RNase Z family. Homodimer. Requires Zn(2+) as cofactor.

It carries out the reaction Endonucleolytic cleavage of RNA, removing extra 3' nucleotides from tRNA precursor, generating 3' termini of tRNAs. A 3'-hydroxy group is left at the tRNA terminus and a 5'-phosphoryl group is left at the trailer molecule.. Functionally, zinc phosphodiesterase, which displays some tRNA 3'-processing endonuclease activity. Probably involved in tRNA maturation, by removing a 3'-trailer from precursor tRNA. This is Ribonuclease Z from Staphylococcus aureus (strain MSSA476).